The chain runs to 198 residues: NAD(P)H dehydrogenase (quinone) (198 aa).

The Flavodoxin-like domain maps to 4 to 189 (ILVLYYSMYG…SIARYQGEYV (186 aa)). Residues 10-15 (SMYGHI) and 78-80 (TRF) contribute to the FMN site. Y12 contacts NAD(+). W98 provides a ligand contact to substrate. FMN contacts are provided by residues 113–118 (STGTGG) and H133.

It belongs to the WrbA family. It depends on FMN as a cofactor.

The enzyme catalyses a quinone + NADH + H(+) = a quinol + NAD(+). It carries out the reaction a quinone + NADPH + H(+) = a quinol + NADP(+). This is NAD(P)H dehydrogenase (quinone) from Salmonella agona (strain SL483).